A 331-amino-acid polypeptide reads, in one-letter code: MTNAVEDSGPRDLLFLLISTSRFNRYMPYYTMMAAVWATFIAGALKLQQDPESLSIEFILYKAGLCFVHCLLLCGAGNTWNDLVDRDIDARVARTKMRPLASGKVTLTEALLWMTGQYFLSVKMLDLILDGRNIWTLMLPLTASIMLYPYLKRPIFSKVFVYPQYILGLAIGYPAITGWASITGSEEPLGDIIKHCIPICLLVFFWCVYFNTAYSHQDSVDDRKMNINSAYVIAGQRIRLFLAFLSVLPLLTIPYIISTINSPWLWVSWMATWTVSIVMQIAQFDSQKLESGGRIHWDNFLLGLWTIVACMVEVGLQKVEFWKNVEGYIKL.

The next 8 helical transmembrane spans lie at 27 to 47, 56 to 76, 127 to 147, 159 to 179, 190 to 210, 240 to 260, 264 to 284, and 295 to 315; these read MPYY…ALKL, IEFI…LCGA, LILD…SIML, VFVY…ITGW, GDII…CVYF, LFLA…ISTI, WLWV…IAQF, and IHWD…VEVG.

This sequence belongs to the UbiA prenyltransferase family. Mg(2+) serves as cofactor.

The protein localises to the golgi apparatus membrane. The catalysed reaction is 5,7-dihydroxy-4-methylphthalide + (2E,6E)-farnesyl diphosphate = 4-farnesyl-3,5-dihydroxy-6-methylphthalide + diphosphate. It participates in secondary metabolite biosynthesis; terpenoid biosynthesis. Polyprenyl transferase; part of the gene cluster that mediates the biosynthesis of mycophenolic acid (MPA), the first isolated antibiotic natural product in the world obtained from a culture of Penicillium brevicompactum in 1893. MpaA' is a Golgi apparatus-associated enzyme that catalyzes the prenylation of 5,7-dihydroxy-4,6-dimethylphthalide (DHMP) to yield farnesyl-DHMP (FDHMP). The first step of the pathway is the synthesis of 5-methylorsellinic acid (5MOA) by the cytosolic polyketide synthase mpaC. 5MOA is then converted to the phthalide compound 5,7-dihydroxy-4,6-dimethylphthalide (DHMP) by the endoplasmic reticulum-bound cytochrome P450 monooxygenase mpaDE. MpaDE first catalyzes hydroxylation of 5-MOA to 4,6-dihydroxy-2-(hydroxymethyl)-3-methylbenzoic acid (DHMB). MpaDE then acts as a lactone synthase that catalyzes the ring closure to convert DHMB into DHMP. The next step is the prenylation of DHMP by the Golgi apparatus-associated prenyltransferase mpaA to yield farnesyl-DHMP (FDHMP). The ER-bound oxygenase mpaB then mediates the oxidative cleavage the C19-C20 double bond in FDHMP to yield FDHMP-3C via a mycophenolic aldehyde intermediate. The O-methyltransferase mpaG catalyzes the methylation of FDHMP-3C to yield MFDHMP-3C. After the cytosolic methylation of FDHMP-3C, MFDHMP-3C enters into peroxisomes probably via free diffusion due to its low molecular weight. Upon a peroxisomal CoA ligation reaction, catalyzed by a beta-oxidation component enzyme acyl-CoA ligase ACL891, MFDHMP-3C-CoA would then be restricted to peroxisomes for the following beta-oxidation pathway steps. The peroxisomal beta-oxidation machinery than converts MFDHMP-3C-CoA into MPA_CoA, via a beta-oxidation chain-shortening process. Finally mpaH acts as a peroxisomal acyl-CoA hydrolase with high substrate specificity toward MPA-CoA to release the final product MPA. This is Polyprenyl transferase mpaA' from Penicillium brevicompactum.